The primary structure comprises 191 residues: Ciliary microtubule-associated protein 3 (191 aa).

In terms of assembly, interacts with proteins involved in ciliary transport, including ARL13B, CETN1, KIF3A, RAB6A, RAB8A, TUBB1 and TUBG1. Interacts with AURKA.

The protein resides in the cytoplasmic vesicle. It is found in the golgi apparatus. Its subcellular location is the trans-Golgi network. It localises to the cytoplasm. Functionally, during primary cilia disassembly, involved in cilia disassembly. Required specifically to control cilia retraction as well as the liberation and duplication of the basal body/centrosome. May act by stimulating AURKA activity at the basal body in a cell cycle-dependent manner. The chain is Ciliary microtubule-associated protein 3 from Homo sapiens (Human).